Here is a 669-residue protein sequence, read N- to C-terminus: DNA mismatch repair protein MutL (669 aa).

A disordered region spans residues phenylalanine 356 to glutamate 382. A compositionally biased stretch (polar residues) spans asparagine 361–lysine 378.

It belongs to the DNA mismatch repair MutL/HexB family.

Functionally, this protein is involved in the repair of mismatches in DNA. It is required for dam-dependent methyl-directed DNA mismatch repair. May act as a 'molecular matchmaker', a protein that promotes the formation of a stable complex between two or more DNA-binding proteins in an ATP-dependent manner without itself being part of a final effector complex. The polypeptide is DNA mismatch repair protein MutL (Staphylococcus aureus (strain USA300)).